The primary structure comprises 630 residues: tRNA uridine 5-carboxymethylaminomethyl modification enzyme MnmG (630 aa).

Residue 13–18 (GGGHAG) participates in FAD binding. Residue 273 to 287 (GPRYCPSIEDKVMRF) coordinates NAD(+).

This sequence belongs to the MnmG family. Homodimer. Heterotetramer of two MnmE and two MnmG subunits. FAD is required as a cofactor.

It localises to the cytoplasm. Functionally, NAD-binding protein involved in the addition of a carboxymethylaminomethyl (cmnm) group at the wobble position (U34) of certain tRNAs, forming tRNA-cmnm(5)s(2)U34. The sequence is that of tRNA uridine 5-carboxymethylaminomethyl modification enzyme MnmG from Actinobacillus pleuropneumoniae serotype 5b (strain L20).